The sequence spans 145 residues: Nucleoside diphosphate kinase (145 aa).

ATP is bound by residues Lys-11, Phe-59, Arg-87, Thr-93, Arg-104, and Asn-114. Catalysis depends on His-117, which acts as the Pros-phosphohistidine intermediate.

It belongs to the NDK family. It depends on Mg(2+) as a cofactor.

The protein resides in the cytoplasm. It catalyses the reaction a 2'-deoxyribonucleoside 5'-diphosphate + ATP = a 2'-deoxyribonucleoside 5'-triphosphate + ADP. The catalysed reaction is a ribonucleoside 5'-diphosphate + ATP = a ribonucleoside 5'-triphosphate + ADP. Its function is as follows. Major role in the synthesis of nucleoside triphosphates other than ATP. The ATP gamma phosphate is transferred to the NDP beta phosphate via a ping-pong mechanism, using a phosphorylated active-site intermediate. This is Nucleoside diphosphate kinase from Sulfolobus acidocaldarius (strain ATCC 33909 / DSM 639 / JCM 8929 / NBRC 15157 / NCIMB 11770).